We begin with the raw amino-acid sequence, 85 residues long: Large ribosomal subunit protein bL27 (85 aa).

The disordered stretch occupies residues 1–21 (MAHKKAGGSTRNGRDSESKRL).

This sequence belongs to the bacterial ribosomal protein bL27 family.

This is Large ribosomal subunit protein bL27 from Pseudomonas entomophila (strain L48).